Here is a 485-residue protein sequence, read N- to C-terminus: Cobyric acid synthase (485 aa).

The GATase cobBQ-type domain occupies 249-437 (HLKIRVPVWQ…WHGLFSQPSA (189 aa)). Catalysis depends on Cys-330, which acts as the Nucleophile. His-429 is an active-site residue.

This sequence belongs to the CobB/CobQ family. CobQ subfamily.

Its pathway is cofactor biosynthesis; adenosylcobalamin biosynthesis. Catalyzes amidations at positions B, D, E, and G on adenosylcobyrinic A,C-diamide. NH(2) groups are provided by glutamine, and one molecule of ATP is hydrogenolyzed for each amidation. In Saccharophagus degradans (strain 2-40 / ATCC 43961 / DSM 17024), this protein is Cobyric acid synthase.